A 95-amino-acid chain; its full sequence is Phosphoribosyl-ATP pyrophosphatase (95 aa).

Belongs to the PRA-PH family.

Its subcellular location is the cytoplasm. It carries out the reaction 1-(5-phospho-beta-D-ribosyl)-ATP + H2O = 1-(5-phospho-beta-D-ribosyl)-5'-AMP + diphosphate + H(+). It participates in amino-acid biosynthesis; L-histidine biosynthesis; L-histidine from 5-phospho-alpha-D-ribose 1-diphosphate: step 2/9. The protein is Phosphoribosyl-ATP pyrophosphatase of Methanosphaera stadtmanae (strain ATCC 43021 / DSM 3091 / JCM 11832 / MCB-3).